Consider the following 610-residue polypeptide: Aspartate--tRNA(Asp/Asn) ligase (610 aa).

Glu196 is a binding site for L-aspartate. An aspartate region spans residues 220–223 (QIFK). Arg242 contributes to the L-aspartate binding site. ATP-binding positions include 242–244 (RDE) and Gln251. His465 serves as a coordination point for L-aspartate. Glu499 contributes to the ATP binding site. Arg506 lines the L-aspartate pocket. An ATP-binding site is contributed by 551–554 (GMDR).

The protein belongs to the class-II aminoacyl-tRNA synthetase family. Type 1 subfamily. As to quaternary structure, homodimer.

The protein resides in the cytoplasm. It carries out the reaction tRNA(Asx) + L-aspartate + ATP = L-aspartyl-tRNA(Asx) + AMP + diphosphate. Aspartyl-tRNA synthetase with relaxed tRNA specificity since it is able to aspartylate not only its cognate tRNA(Asp) but also tRNA(Asn). Reaction proceeds in two steps: L-aspartate is first activated by ATP to form Asp-AMP and then transferred to the acceptor end of tRNA(Asp/Asn). This is Aspartate--tRNA(Asp/Asn) ligase from Nitratidesulfovibrio vulgaris (strain ATCC 29579 / DSM 644 / CCUG 34227 / NCIMB 8303 / VKM B-1760 / Hildenborough) (Desulfovibrio vulgaris).